The primary structure comprises 155 residues: 2-C-methyl-D-erythritol 2,4-cyclodiphosphate synthase (155 aa).

The a divalent metal cation site is built by Asp8 and His10. 4-CDP-2-C-methyl-D-erythritol 2-phosphate contacts are provided by residues Asp8–His10 and His34–Ser35. A divalent metal cation is bound at residue His42. 4-CDP-2-C-methyl-D-erythritol 2-phosphate-binding positions include Asp56–Gly58, Phe61–Asp65, Ala100–Leu106, Thr132–Glu135, Phe139, and Lys142.

Belongs to the IspF family. In terms of assembly, homotrimer. A divalent metal cation serves as cofactor.

It carries out the reaction 4-CDP-2-C-methyl-D-erythritol 2-phosphate = 2-C-methyl-D-erythritol 2,4-cyclic diphosphate + CMP. The protein operates within isoprenoid biosynthesis; isopentenyl diphosphate biosynthesis via DXP pathway; isopentenyl diphosphate from 1-deoxy-D-xylulose 5-phosphate: step 4/6. Involved in the biosynthesis of isopentenyl diphosphate (IPP) and dimethylallyl diphosphate (DMAPP), two major building blocks of isoprenoid compounds. Catalyzes the conversion of 4-diphosphocytidyl-2-C-methyl-D-erythritol 2-phosphate (CDP-ME2P) to 2-C-methyl-D-erythritol 2,4-cyclodiphosphate (ME-CPP) with a corresponding release of cytidine 5-monophosphate (CMP). This Clostridium botulinum (strain ATCC 19397 / Type A) protein is 2-C-methyl-D-erythritol 2,4-cyclodiphosphate synthase.